Reading from the N-terminus, the 56-residue chain is Large ribosomal subunit protein bL33 (56 aa).

Belongs to the bacterial ribosomal protein bL33 family.

The polypeptide is Large ribosomal subunit protein bL33 (Halorhodospira halophila (strain DSM 244 / SL1) (Ectothiorhodospira halophila (strain DSM 244 / SL1))).